A 498-amino-acid polypeptide reads, in one-letter code: Transcription factor kayak (498 aa).

Over residues 108-127 the composition is skewed to polar residues; the sequence is ASLGQGSESEDSNASYNDTQ. Disordered stretches follow at residues 108–144 and 177–234; these read ASLG…HTDS and GSAS…KRRV. Composition is skewed to low complexity over residues 135–144 and 177–191; these read TDTSSAHTDS and GSAS…TSNT. Residues 212 to 275 enclose the bZIP domain; the sequence is EQKRAVRRER…KQLEYLLATH (64 aa). Residues 214–233 are basic motif; the sequence is KRAVRRERNKQAAARCRKRR. The interval 240–247 is leucine-zipper; the sequence is LTEEVEQL. The span at 304–325 shows a compositional bias: low complexity; the sequence is AGSSGSGASSHHNHNSNDSSNG. Disordered regions lie at residues 304–345 and 465–498; these read AGSS…SPLD and TPVS…LVSL. The segment covering 333-343 has biased composition (polar residues); sequence TLNSTGRSNSP. Serine 342 carries the phosphoserine modification.

It belongs to the bZIP family. Fos subfamily. As to quaternary structure, homodimer. Heterodimer with Jra. The kay-Jra heterodimer binds more stably to the AP-1 site than either of the two proteins alone.

Its subcellular location is the nucleus. Developmentally regulated transcription factor AP-1 binds and recognizes the enhancer DNA sequence: 5'-TGA[CG]TCA-3'. May play a role in the function or determination of a particular subset of cells in the developing embryo. It is able to carry out its function either independently of or in conjunction with Jra. This chain is Transcription factor kayak, found in Drosophila simulans (Fruit fly).